Consider the following 177-residue polypeptide: ATP synthase subunit delta (177 aa).

This sequence belongs to the ATPase delta chain family. F-type ATPases have 2 components, F(1) - the catalytic core - and F(0) - the membrane proton channel. F(1) has five subunits: alpha(3), beta(3), gamma(1), delta(1), epsilon(1). F(0) has three main subunits: a(1), b(2) and c(10-14). The alpha and beta chains form an alternating ring which encloses part of the gamma chain. F(1) is attached to F(0) by a central stalk formed by the gamma and epsilon chains, while a peripheral stalk is formed by the delta and b chains.

It is found in the cell inner membrane. In terms of biological role, f(1)F(0) ATP synthase produces ATP from ADP in the presence of a proton or sodium gradient. F-type ATPases consist of two structural domains, F(1) containing the extramembraneous catalytic core and F(0) containing the membrane proton channel, linked together by a central stalk and a peripheral stalk. During catalysis, ATP synthesis in the catalytic domain of F(1) is coupled via a rotary mechanism of the central stalk subunits to proton translocation. Functionally, this protein is part of the stalk that links CF(0) to CF(1). It either transmits conformational changes from CF(0) to CF(1) or is implicated in proton conduction. This chain is ATP synthase subunit delta, found in Shigella boydii serotype 18 (strain CDC 3083-94 / BS512).